The sequence spans 275 residues: Large ribosomal subunit protein uL2 (275 aa).

A disordered region spans residues 221–275; the sequence is RGTAMNPVDHPHGGGEGRTGEGRVPVNPWGQPTKGYRTRSNKRTNSMIVQRRHKR. The segment covering 229-241 has biased composition (basic and acidic residues); sequence DHPHGGGEGRTGE.

This sequence belongs to the universal ribosomal protein uL2 family. As to quaternary structure, part of the 50S ribosomal subunit. Forms a bridge to the 30S subunit in the 70S ribosome.

Its function is as follows. One of the primary rRNA binding proteins. Required for association of the 30S and 50S subunits to form the 70S ribosome, for tRNA binding and peptide bond formation. It has been suggested to have peptidyltransferase activity; this is somewhat controversial. Makes several contacts with the 16S rRNA in the 70S ribosome. This Dechloromonas aromatica (strain RCB) protein is Large ribosomal subunit protein uL2.